The following is a 62-amino-acid chain: Calmodulin regulator protein PCP4 (62 aa).

The tract at residues 1-39 (MSERQSAGATNGKDKTSGDNDGQKKVQEEFDIDMDAPET) is disordered. The span at 12–28 (GKDKTSGDNDGQKKVQE) shows a compositional bias: basic and acidic residues. Positions 28–40 (EEFDIDMDAPETE) are acidic; binds calcium and is required for modulating the calcium-binding kinetics of calmodulin. An IQ domain is found at 39-62 (TERAAVAIQSQFRKFQKKKAGSQS).

Belongs to the PCP4 family. In terms of assembly, binds to both calcium-free and calcium-bound calmodulin. The affinity for the calcium-bound form is 50-fold greater.

Functionally, functions as a modulator of calcium-binding by calmodulin. Thereby, regulates calmodulin activity and the different processes it controls. For instance, may play a role in neuronal differentiation through activation of calmodulin-dependent kinase signaling pathways. The polypeptide is Calmodulin regulator protein PCP4 (Mus musculus (Mouse)).